The chain runs to 377 residues: uncharacterized protein (377 aa).

10 consecutive transmembrane segments (helical) span residues 4–24 (LLTPWRGVAAGFLLNGILLGT), 41–61 (ASFGVLLLLLGLGALISFPIT), 85–105 (IAALGLAPTIPLLAIALFLFG), 134–154 (FHAMWSVGAVLGAAGGYIATV), 159–179 (VYVHFLVTAVTIGGLLGPFLL), 192–212 (GAVGLVLPNSGLFLVGLIALA), 278–298 (VFGILLIVLGETLPLVVAGFV), 301–321 (GVGYAAVLPLAFSRAAADLVV), 327–347 (IASVAIFAYGAMTLGPFAIGL), and 356–376 (LCFFIVGLFAALVAVLAPVLK).

This sequence to R.meliloti MosC.

The protein resides in the cell membrane. In terms of biological role, could be involved in a transport system. This is an uncharacterized protein from Sinorhizobium fredii (strain NBRC 101917 / NGR234).